The chain runs to 146 residues: Large ribosomal subunit protein uL15 (146 aa).

Residues 1–51 form a disordered region; the sequence is MKLHELKPAKGSRKVRNRVGRGTSSGNGKTSGRGQKGQKARSGGGVRLGFE. Positions 10 to 19 are enriched in basic residues; the sequence is KGSRKVRNRV. Composition is skewed to gly residues over residues 23 to 35 and 42 to 51; these read TSSG…GRGQ and SGGGVRLGFE.

This sequence belongs to the universal ribosomal protein uL15 family. Part of the 50S ribosomal subunit.

In terms of biological role, binds to the 23S rRNA. The chain is Large ribosomal subunit protein uL15 from Streptococcus equi subsp. equi (strain 4047).